A 507-amino-acid polypeptide reads, in one-letter code: Pyruvate kinase (507 aa).

Arg-50 contacts substrate. Positions 52, 54, 84, and 85 each coordinate K(+). Asn-52 to His-55 provides a ligand contact to ATP. ATP is bound by residues Arg-91 and Lys-177. Glu-242 contributes to the Mg(2+) binding site. Substrate is bound by residues Gly-265, Asp-266, and Thr-298. Asp-266 provides a ligand contact to Mg(2+).

The protein belongs to the pyruvate kinase family. In terms of assembly, homotetramer. Mg(2+) is required as a cofactor. It depends on K(+) as a cofactor.

It catalyses the reaction pyruvate + ATP = phosphoenolpyruvate + ADP + H(+). The protein operates within carbohydrate degradation; glycolysis; pyruvate from D-glyceraldehyde 3-phosphate: step 5/5. The chain is Pyruvate kinase (pyk) from Dictyostelium discoideum (Social amoeba).